The chain runs to 97 residues: U6-theraphotoxin-Hhn1a 4 (97 aa).

Positions 1–33 are cleaved as a signal peptide; it reads MLIKQFSRRSKNMKVQILLAFAALFVLAVGSYA. Residues 34-61 constitute a propeptide that is removed on maturation; sequence SESKKLDLRDALLSAMFSADYQLNPQER. 3 disulfide bridges follow: C63-C77, C70-C82, and C76-C89.

This sequence belongs to the neurotoxin 10 (Hwtx-1) family. 12 (Hntx-12) subfamily. In terms of tissue distribution, expressed by the venom gland.

The protein localises to the secreted. Its function is as follows. Ion channel inhibitor. The sequence is that of U6-theraphotoxin-Hhn1a 4 from Cyriopagopus hainanus (Chinese bird spider).